We begin with the raw amino-acid sequence, 597 residues long: Lipoprotein LpqB (597 aa).

Residues 1-28 (MTPGRRSALLSRSVCGAIVLAVLVTVSG) form the signal peptide. The N-palmitoyl cysteine moiety is linked to residue Cys-29. Cys-29 is lipidated: S-diacylglycerol cysteine. A compositionally biased stretch (polar residues) spans 38-51 (PQAIGTINRDSPGS). Residues 38–58 (PQAIGTINRDSPGSSVAAPAP) are disordered.

It belongs to the LpqB lipoprotein family.

It is found in the cell membrane. This is Lipoprotein LpqB from Rhodococcus jostii (strain RHA1).